A 328-amino-acid chain; its full sequence is N-acetyl-gamma-glutamyl-phosphate reductase (328 aa).

The active site involves Cys-143.

This sequence belongs to the NAGSA dehydrogenase family. Type 1 subfamily.

It is found in the cytoplasm. It catalyses the reaction N-acetyl-L-glutamate 5-semialdehyde + phosphate + NADP(+) = N-acetyl-L-glutamyl 5-phosphate + NADPH + H(+). It participates in amino-acid biosynthesis; L-arginine biosynthesis; N(2)-acetyl-L-ornithine from L-glutamate: step 3/4. In terms of biological role, catalyzes the NADPH-dependent reduction of N-acetyl-5-glutamyl phosphate to yield N-acetyl-L-glutamate 5-semialdehyde. This Methanosphaerula palustris (strain ATCC BAA-1556 / DSM 19958 / E1-9c) protein is N-acetyl-gamma-glutamyl-phosphate reductase.